The following is a 217-amino-acid chain: Secreted RxLR effector protein 147 (217 aa).

The first 23 residues, 1–23 (MRGAFYVTTALLITNSIRTAAEA), serve as a signal peptide directing secretion. The tract at residues 22–52 (EANPPGRQPMSHHDGVVPGKSSPRRFLQGSH) is disordered. The short motif at 46–67 (RFLQGSHEPHDKFAVSAANEER) is the RxLR-dEER element.

Belongs to the RxLR effector family.

Its subcellular location is the secreted. The protein resides in the host nucleus. The protein localises to the host cytoplasm. Functionally, secreted effector that completely suppresses the host cell death induced by cell death-inducing proteins. This chain is Secreted RxLR effector protein 147, found in Plasmopara viticola (Downy mildew of grapevine).